Consider the following 902-residue polypeptide: Leucine-rich repeat-containing G-protein coupled receptor 5A (902 aa).

Positions 1 to 22 (MDTSRTSLFLCSVLYSLQLVGS) are cleaved as a signal peptide. The Extracellular segment spans residues 23–557 (ARPGKQHRSC…DHLFGSWLTR (535 aa)). Disulfide bonds link cysteine 32–cysteine 38 and cysteine 36–cysteine 49. In terms of domain architecture, LRRNT spans 32–61 (CPTPCECEQDGMLVRVDCSDRGLTGLPRNI). LRR repeat units lie at residues 41–61 (DGML…PRNI), 62–85 (SIFT…ALHN), 86–109 (LHFL…AFAG), 111–133 (GSLK…ALQN), 134–157 (LRSL…SFNG), 159–181 (FSLR…ALES), 182–205 (LSAL…AFGN), 207–229 (SSLV…CFDG), 230–253 (LHSL…IKTL), 254–276 (KNLK…AFIG), 278–300 (PSLI…AFQH), 301–324 (LPEL…LTGT), 325–347 (TSLE…VCNQ), 348–372 (LPNL…GCQR), 374–393 (QKID…TFQQ), 394–417 (LVGL…SFSS), and 418–441 (LPSL…GLHG). Residues asparagine 60 and asparagine 74 are each glycosylated (N-linked (GlcNAc...) asparagine). Asparagine 205 is a glycosylation site (N-linked (GlcNAc...) asparagine). Cysteine 345 and cysteine 370 are oxidised to a cystine. Cysteines 476 and 537 form a disulfide. The N-linked (GlcNAc...) asparagine glycan is linked to asparagine 496. The helical transmembrane segment at 558–578 (IGVWLIVLLSFVCNALVIATV) threads the bilayer. At 579 to 589 (FRPLSYVPSIK) the chain is on the cytoplasmic side. Residues 590-610 (LLIGLIAIINTLMGLSSGVLA) form a helical membrane-spanning segment. Residues 598–619 (INTLMGLSSGVLATVDALTFGN) form an LRR 18 repeat. The Extracellular portion of the chain corresponds to 611–634 (TVDALTFGNFAQYGAWWESGVGCQ). Residues cysteine 633 and cysteine 708 are joined by a disulfide bond. A helical transmembrane segment spans residues 635–655 (ITGFLSVFAAETSVFLLTVAA). The Cytoplasmic portion of the chain corresponds to 656 to 678 (LERGFSIKCTTKFETKSSFLSVK). A helical membrane pass occupies residues 679–699 (LSIVFCFLLSIIIAVSPLMSG). Topologically, residues 700–718 (STYGTSPFCFPLLFGDPSS) are extracellular. A helical membrane pass occupies residues 719-739 (MVFMVALVLLNSLCFLVMTVA). Residues 740 to 763 (YTKLYCSLEKGELENVWDCSMVKH) lie on the Cytoplasmic side of the membrane. Residues 764–784 (IALLLFTNCILYCPVAFLSFS) traverse the membrane as a helical segment. Over 785-798 (SLLNLTFISPEVNK) the chain is Extracellular. N-linked (GlcNAc...) asparagine glycans are attached at residues asparagine 788 and asparagine 797. A helical transmembrane segment spans residues 799-819 (SILLLIIPLPACLNPLLYILF). Residues 820 to 902 (NPHFKEDIGS…LSAVAFVPCH (83 aa)) lie on the Cytoplasmic side of the membrane.

It belongs to the G-protein coupled receptor 1 family. As to expression, expressed in the developing epithelial stem cells of the intestine.

Its subcellular location is the cell membrane. It is found in the golgi apparatus. The protein resides in the trans-Golgi network membrane. In terms of biological role, receptor for R-spondins that potentiates the canonical Wnt signaling pathway and acts as a stem cell marker of the intestinal epithelium and the hair follicle. Upon binding to R-spondins (RSPO1, RSPO2, RSPO3 or RSPO4), associates with phosphorylated LRP6 and frizzled receptors that are activated by extracellular Wnt receptors, triggering the canonical Wnt signaling pathway to increase expression of target genes. In contrast to classical G-protein coupled receptors, does not activate heterotrimeric G-proteins to transduce the signal. Involved in the development and/or maintenance of the adult intestinal stem cells during postembryonic development. The protein is Leucine-rich repeat-containing G-protein coupled receptor 5A (lgr5-a) of Xenopus laevis (African clawed frog).